The chain runs to 103 residues: Large ribosomal subunit protein bL21 (103 aa).

Belongs to the bacterial ribosomal protein bL21 family. Part of the 50S ribosomal subunit. Contacts protein L20.

This protein binds to 23S rRNA in the presence of protein L20. The sequence is that of Large ribosomal subunit protein bL21 from Thermobifida fusca (strain YX).